The sequence spans 814 residues: Exostosin-like-3 homolog (814 aa).

The Cytoplasmic segment spans residues 1 to 14 (MAIKLNGSSRSFVP). A helical; Signal-anchor for type II membrane protein transmembrane segment spans residues 15-35 (SLRVSAFLIFIFFVITYIIIY). Asn36, Asn227, Asn297, Asn322, Asn454, and Asn492 each carry an N-linked (GlcNAc...) asparagine glycan. Residues 36–814 (NVSFSEPSWI…QNHQKCFKYV (779 aa)) lie on the Lumenal side of the membrane. UDP-N-acetyl-alpha-D-glucosamine contacts are provided by Arg570, Asn595, Asn620, Arg625, Asp641, Asp642, and Asp643. Asp643 contributes to the Mn(2+) binding site. N-linked (GlcNAc...) asparagine glycosylation occurs at Asn685. Residues Cys726 and Cys774 are joined by a disulfide bond. 3 residues coordinate UDP-N-acetyl-alpha-D-glucosamine: Glu727, Asp728, and Arg771. The active site involves Asp728.

This sequence belongs to the glycosyltransferase 47 family. In terms of assembly, interacts with rib-1. Mn(2+) is required as a cofactor.

Its subcellular location is the endoplasmic reticulum membrane. It is found in the golgi apparatus membrane. It carries out the reaction 3-O-(beta-D-GlcA-(1-&gt;3)-beta-D-Gal-(1-&gt;3)-beta-D-Gal-(1-&gt;4)-beta-D-Xyl)-L-seryl-[protein] + UDP-N-acetyl-alpha-D-glucosamine = 3-O-(alpha-D-GlcNAc-(1-&gt;4)-beta-D-GlcA-(1-&gt;3)-beta-D-Gal-(1-&gt;3)-beta-D-Gal-(1-&gt;4)-beta-D-Xyl)-L-seryl-[protein] + UDP + H(+). The catalysed reaction is 3-O-{[(1-&gt;4)-beta-D-GlcA-(1-&gt;4)-alpha-D-GlcNAc](n)-(1-&gt;4)-beta-D-GlcA-(1-&gt;3)-beta-D-Gal-(1-&gt;3)-beta-D-Gal-(1-&gt;4)-beta-D-Xyl}-L-seryl-[protein] + UDP-N-acetyl-alpha-D-glucosamine = 3-O-{alpha-D-GlcNAc-[(1-&gt;4)-beta-D-GlcA-(1-&gt;4)-alpha-D-GlcNAc](n)-(1-&gt;4)-beta-D-GlcA-(1-&gt;3)-beta-D-Gal-(1-&gt;3)-beta-D-Gal-(1-&gt;4)-beta-D-Xyl}-L-seryl-[protein] + UDP + H(+). It catalyses the reaction 3-O-{alpha-D-GlcNAc-[(1-&gt;4)-beta-D-GlcA-(1-&gt;4)-alpha-D-GlcNAc](n)-(1-&gt;4)-beta-D-GlcA-(1-&gt;3)-beta-D-Gal-(1-&gt;3)-beta-D-Gal-(1-&gt;4)-beta-D-Xyl}-L-seryl-[protein] + UDP-alpha-D-glucuronate = 3-O-{[(1-&gt;4)-beta-D-GlcA-(1-&gt;4)-alpha-D-GlcNAc](n+1)-(1-&gt;4)-beta-D-GlcA-(1-&gt;3)-beta-D-Gal-(1-&gt;3)-beta-D-Gal-(1-&gt;4)-beta-D-Xyl}-L-seryl-[protein] + UDP + H(+). It functions in the pathway glycan metabolism; heparan sulfate biosynthesis. Its activity is regulated as follows. Binding to rib-1 is required for GlcAT-II activity and for increasing GlcNAc-II activity in vitro. Its function is as follows. Glycosyltransferase required for the biosynthesis of heparan sulfate. Initiates heparan sulfate synthesis by transferring GlcNAc to the (GlcA-Gal-Gal-Xyl-)Ser core linker (GlcNAcT-I activity). In association with rib-1, is also responsible for the alternating addition of beta-1-4-linked glucuronic acid (GlcA) and alpha-1-4-linked N-acetylglucosamine (GlcNAc) units to nascent heparan sulfate chains (GlcNAcT-II and GlcAT-II activities). Required for normal ventral epidermal enclosure during the early stages of embryonic development. In addition, involved in the elongation of the pharyngeal isthmus during the later stages of embryonic development. Involved in the directed migration of hermaphrodite-specific neurons. This chain is Exostosin-like-3 homolog (rib-2), found in Caenorhabditis elegans.